A 1072-amino-acid polypeptide reads, in one-letter code: Carbamoyl phosphate synthase large chain (1072 aa).

The interval 1-401 (MPKRLDINTI…SLLKAVRSLE (401 aa)) is carboxyphosphate synthetic domain. Arginine 129, arginine 169, glycine 175, glycine 176, lysine 208, isoleucine 210, glutamate 215, glycine 241, valine 242, histidine 243, glutamine 284, and glutamate 298 together coordinate ATP. The ATP-grasp 1 domain maps to 133-327 (RTLMQDLNEP…IAKLAAKIAV (195 aa)). 3 residues coordinate Mg(2+): glutamine 284, glutamate 298, and asparagine 300. 3 residues coordinate Mn(2+): glutamine 284, glutamate 298, and asparagine 300. The tract at residues 402–546 (LGIYHLELDH…YSTYAEENES (145 aa)) is oligomerization domain. Residues 547-929 (IVTDRKSVVV…ALYKGLVASG (383 aa)) form a carbamoyl phosphate synthetic domain region. One can recognise an ATP-grasp 2 domain in the interval 671-861 (EAALTKLGIP…MANVATKVIL (191 aa)). Residues arginine 707, arginine 746, glutamate 752, glycine 777, valine 778, histidine 779, serine 780, glutamine 820, and glutamate 832 each coordinate ATP. The Mg(2+) site is built by glutamine 820, glutamate 832, and asparagine 834. Residues glutamine 820, glutamate 832, and asparagine 834 each coordinate Mn(2+). An MGS-like domain is found at 930-1072 (INIPTHGSVI…QTKRHEVVHA (143 aa)). Residues 930 to 1072 (INIPTHGSVI…QTKRHEVVHA (143 aa)) are allosteric domain.

The protein belongs to the CarB family. In terms of assembly, composed of two chains; the small (or glutamine) chain promotes the hydrolysis of glutamine to ammonia, which is used by the large (or ammonia) chain to synthesize carbamoyl phosphate. Tetramer of heterodimers (alpha,beta)4. Mg(2+) serves as cofactor. Mn(2+) is required as a cofactor.

It carries out the reaction hydrogencarbonate + L-glutamine + 2 ATP + H2O = carbamoyl phosphate + L-glutamate + 2 ADP + phosphate + 2 H(+). The enzyme catalyses hydrogencarbonate + NH4(+) + 2 ATP = carbamoyl phosphate + 2 ADP + phosphate + 2 H(+). It participates in amino-acid biosynthesis; L-arginine biosynthesis; carbamoyl phosphate from bicarbonate: step 1/1. It functions in the pathway pyrimidine metabolism; UMP biosynthesis via de novo pathway; (S)-dihydroorotate from bicarbonate: step 1/3. In terms of biological role, large subunit of the glutamine-dependent carbamoyl phosphate synthetase (CPSase). CPSase catalyzes the formation of carbamoyl phosphate from the ammonia moiety of glutamine, carbonate, and phosphate donated by ATP, constituting the first step of 2 biosynthetic pathways, one leading to arginine and/or urea and the other to pyrimidine nucleotides. The large subunit (synthetase) binds the substrates ammonia (free or transferred from glutamine from the small subunit), hydrogencarbonate and ATP and carries out an ATP-coupled ligase reaction, activating hydrogencarbonate by forming carboxy phosphate which reacts with ammonia to form carbamoyl phosphate. The sequence is that of Carbamoyl phosphate synthase large chain from Bacillus cereus (strain ATCC 10987 / NRS 248).